A 158-amino-acid polypeptide reads, in one-letter code: SKP1-like protein 18 (158 aa).

Positions 99 to 157 (ILAANYLNFEGLLGFASQTVADYIKDKTPEEVREIFNIENDFTPEEEEEIRKENAWTFN) are interaction with the F-box domain of F-box proteins.

Belongs to the SKP1 family. Part of a SCF (SKP1-cullin-F-box) protein ligase complex. Interacts with CPR1/CPR30, EBF1, SKP2A, At3g61590, At4g38940 and At5g49610. Expressed in young seedlings, roots, leaves, floral stems, inflorescences, pollen, and siliques.

Its subcellular location is the nucleus. It participates in protein modification; protein ubiquitination. Functionally, involved in ubiquitination and subsequent proteasomal degradation of target proteins. Together with CUL1, RBX1 and a F-box protein, it forms a SCF E3 ubiquitin ligase complex. The functional specificity of this complex depends on the type of F-box protein. In the SCF complex, it serves as an adapter that links the F-box protein to CUL1. The protein is SKP1-like protein 18 (ASK18) of Arabidopsis thaliana (Mouse-ear cress).